Consider the following 194-residue polypeptide: MAGREGHFRLIAGLGNPGSKYAGTRHNAGFWLVDELVRRYGGELREEPKFRGDCARVLIDGYDCRLVKPMTYMNHSGQAVGALANFFKIPPEAILVAHDEIDLPPGSVRLKRGGGHGGHNGLRHIQSTLGTPDFARLRLGVGHPGHKDQVVPHVLSRPSPDELRQLERAIDDAADQIPRLLAGEWDRACQQLHA.

Tyrosine 21 is a tRNA binding site. Histidine 26 serves as the catalytic Proton acceptor. Tyrosine 72, asparagine 74, and asparagine 120 together coordinate tRNA.

This sequence belongs to the PTH family. As to quaternary structure, monomer.

It is found in the cytoplasm. The enzyme catalyses an N-acyl-L-alpha-aminoacyl-tRNA + H2O = an N-acyl-L-amino acid + a tRNA + H(+). In terms of biological role, hydrolyzes ribosome-free peptidyl-tRNAs (with 1 or more amino acids incorporated), which drop off the ribosome during protein synthesis, or as a result of ribosome stalling. Functionally, catalyzes the release of premature peptidyl moieties from peptidyl-tRNA molecules trapped in stalled 50S ribosomal subunits, and thus maintains levels of free tRNAs and 50S ribosomes. The chain is Peptidyl-tRNA hydrolase from Halorhodospira halophila (strain DSM 244 / SL1) (Ectothiorhodospira halophila (strain DSM 244 / SL1)).